The chain runs to 338 residues: DNA-directed RNA polymerase subunit alpha (338 aa).

An alpha N-terminal domain (alpha-NTD) region spans residues 1-225 (MLISQRPTLT…ELFGLARELN (225 aa)). The interval 242–338 (YIAAYSMPIE…YIDVEPEDAE (97 aa)) is alpha C-terminal domain (alpha-CTD). Positions 314–338 (FDPSTLEGYDAETGGYIDVEPEDAE) are disordered.

It belongs to the RNA polymerase alpha chain family. As to quaternary structure, homodimer. The RNAP catalytic core consists of 2 alpha, 1 beta, 1 beta' and 1 omega subunit. When a sigma factor is associated with the core the holoenzyme is formed, which can initiate transcription.

The catalysed reaction is RNA(n) + a ribonucleoside 5'-triphosphate = RNA(n+1) + diphosphate. Functionally, DNA-dependent RNA polymerase catalyzes the transcription of DNA into RNA using the four ribonucleoside triphosphates as substrates. This is DNA-directed RNA polymerase subunit alpha from Corynebacterium efficiens (strain DSM 44549 / YS-314 / AJ 12310 / JCM 11189 / NBRC 100395).